The primary structure comprises 379 residues: Cobalt-precorrin-5B C(1)-methyltransferase (379 aa).

Belongs to the CbiD family.

It carries out the reaction Co-precorrin-5B + S-adenosyl-L-methionine = Co-precorrin-6A + S-adenosyl-L-homocysteine. The protein operates within cofactor biosynthesis; adenosylcobalamin biosynthesis; cob(II)yrinate a,c-diamide from sirohydrochlorin (anaerobic route): step 6/10. Its function is as follows. Catalyzes the methylation of C-1 in cobalt-precorrin-5B to form cobalt-precorrin-6A. This chain is Cobalt-precorrin-5B C(1)-methyltransferase, found in Salmonella heidelberg (strain SL476).